We begin with the raw amino-acid sequence, 360 residues long: Photosystem II protein D1 (360 aa).

3 helical membrane-spanning segments follow: residues 29-46 (YIGW…TATS), 118-133 (HFLL…EWEL), and 142-156 (WIFV…AASA). Histidine 118 lines the chlorophyll a pocket. Residue tyrosine 126 participates in pheophytin a binding. Positions 170 and 189 each coordinate [CaMn4O5] cluster. Residues 197-218 (FHMAGVAGVFGGSLFSAMHGSL) form a helical membrane-spanning segment. Residue histidine 198 participates in chlorophyll a binding. Residues histidine 215 and 264 to 265 (SF) contribute to the a quinone site. Histidine 215 contributes to the Fe cation binding site. Histidine 272 lines the Fe cation pocket. A helical transmembrane segment spans residues 274-288 (FLAAWPVVGIWLTAL). Positions 332, 333, 342, and 344 each coordinate [CaMn4O5] cluster. A propeptide spanning residues 345–360 (SNEVLPVAVNAPAVNG) is cleaved from the precursor.

The protein belongs to the reaction center PufL/M/PsbA/D family. As to quaternary structure, PSII is composed of 1 copy each of membrane proteins PsbA, PsbB, PsbC, PsbD, PsbE, PsbF, PsbH, PsbI, PsbJ, PsbK, PsbL, PsbM, PsbT, PsbX, PsbY, PsbZ, Psb30/Ycf12, at least 3 peripheral proteins of the oxygen-evolving complex and a large number of cofactors. It forms dimeric complexes. Requires The D1/D2 heterodimer binds P680, chlorophylls that are the primary electron donor of PSII, and subsequent electron acceptors. It shares a non-heme iron and each subunit binds pheophytin, quinone, additional chlorophylls, carotenoids and lipids. D1 provides most of the ligands for the Mn4-Ca-O5 cluster of the oxygen-evolving complex (OEC). There is also a Cl(-1) ion associated with D1 and D2, which is required for oxygen evolution. The PSII complex binds additional chlorophylls, carotenoids and specific lipids. as cofactor. In terms of processing, tyr-161 forms a radical intermediate that is referred to as redox-active TyrZ, YZ or Y-Z. C-terminally processed by CTPA; processing is essential to allow assembly of the oxygen-evolving complex and thus photosynthetic growth.

Its subcellular location is the plastid. It is found in the chloroplast thylakoid membrane. It catalyses the reaction 2 a plastoquinone + 4 hnu + 2 H2O = 2 a plastoquinol + O2. Functionally, photosystem II (PSII) is a light-driven water:plastoquinone oxidoreductase that uses light energy to abstract electrons from H(2)O, generating O(2) and a proton gradient subsequently used for ATP formation. It consists of a core antenna complex that captures photons, and an electron transfer chain that converts photonic excitation into a charge separation. The D1/D2 (PsbA/PsbD) reaction center heterodimer binds P680, the primary electron donor of PSII as well as several subsequent electron acceptors. In Heterosigma akashiwo (Chromophytic alga), this protein is Photosystem II protein D1.